The primary structure comprises 153 residues: Vasotocin-neurophysin VT 1 (153 aa).

The signal sequence occupies residues 1–19 (MPQCALLLSLLGLLALSSA). The cysteines at positions 20 and 25 are disulfide-linked. Gly28 carries the post-translational modification Glycine amide. 7 disulfide bridges follow: Cys41–Cys85, Cys44–Cys58, Cys52–Cys75, Cys59–Cys65, Cys92–Cys105, Cys99–Cys117, and Cys106–Cys111.

This sequence belongs to the vasopressin/oxytocin family. In terms of processing, seven disulfide bonds are present in neurophysin.

Its subcellular location is the secreted. Functionally, vasotocin is probably an antidiuretic hormone. This is Vasotocin-neurophysin VT 1 from Takifugu rubripes (Japanese pufferfish).